The sequence spans 142 residues: COA8 family protein Y39B6A.34, mitochondrial (142 aa).

It belongs to the COA8 family.

It is found in the mitochondrion inner membrane. Its function is as follows. May be required for cytochrome c complex (COX) assembly and function, COX being the terminal component of the mitochondrial respiratory chain. The polypeptide is COA8 family protein Y39B6A.34, mitochondrial (Caenorhabditis elegans).